The following is a 408-amino-acid chain: ORC1-type DNA replication protein 15 (408 aa).

Residues 60 to 64, tyrosine 208, and arginine 220 contribute to the ATP site; that span reads VGKTA.

The protein belongs to the CDC6/cdc18 family.

Involved in regulation of DNA replication. This is ORC1-type DNA replication protein 15 (cdc6o) from Haloarcula marismortui (strain ATCC 43049 / DSM 3752 / JCM 8966 / VKM B-1809) (Halobacterium marismortui).